The sequence spans 238 residues: 2-C-methyl-D-erythritol 4-phosphate cytidylyltransferase (238 aa).

This sequence belongs to the IspD/TarI cytidylyltransferase family. IspD subfamily.

The catalysed reaction is 2-C-methyl-D-erythritol 4-phosphate + CTP + H(+) = 4-CDP-2-C-methyl-D-erythritol + diphosphate. It functions in the pathway isoprenoid biosynthesis; isopentenyl diphosphate biosynthesis via DXP pathway; isopentenyl diphosphate from 1-deoxy-D-xylulose 5-phosphate: step 2/6. Catalyzes the formation of 4-diphosphocytidyl-2-C-methyl-D-erythritol from CTP and 2-C-methyl-D-erythritol 4-phosphate (MEP). The protein is 2-C-methyl-D-erythritol 4-phosphate cytidylyltransferase of Leptospira interrogans serogroup Icterohaemorrhagiae serovar copenhageni (strain Fiocruz L1-130).